Here is a 114-residue protein sequence, read N- to C-terminus: U17-barytoxin-Tl1a (114 aa).

The N-terminal stretch at 1 to 20 (MKTIIVFLSLLVLATKFGDA) is a signal peptide. A propeptide spanning residues 21–74 (NEGVNQEQMKEVIQNEFREDFLNEMAPMSLLQQLEAIESTLLEKEADRNSRQKR) is cleaved from the precursor. Disulfide bonds link Cys-75–Cys-88, Cys-82–Cys-93, and Cys-87–Cys-108.

The protein belongs to the neurotoxin 14 (magi-1) family. 03 (ICK-30-40) subfamily. In terms of tissue distribution, expressed by the venom gland.

It localises to the secreted. In terms of biological role, ion channel inhibitor. The protein is U17-barytoxin-Tl1a of Trittame loki (Brush-footed trapdoor spider).